The primary structure comprises 341 residues: Binder of USO1 and GRH1 protein 1 (341 aa).

The interval 1–181 (MSEQESDEVK…AADDLFANDG (181 aa)) is disordered. S2 carries the post-translational modification N-acetylserine. A coiled-coil region spans residues 2–41 (SEQESDEVKRMKQLEEARKRVEELKKKKNKKNKGKKNKNS). Positions 7-26 (DEVKRMKQLEEARKRVEELK) are enriched in basic and acidic residues. Residues 27-39 (KKKNKKNKGKKNK) show a composition bias toward basic residues. The segment covering 69–78 (KANSTKSENN) has biased composition (polar residues). Residues 79 to 91 (DQNDVDEESEEKE) show a composition bias toward acidic residues. The residue at position 87 (S87) is a Phosphoserine. Residues 118–132 (GKDDAENTKKEEVQE) show a composition bias toward basic and acidic residues. The span at 158–171 (VQTQEGNEPSNTSE) shows a compositional bias: polar residues. The residue at position 170 (S170) is a Phosphoserine. Positions 188–272 (LTTIKKQKEE…LKLAEAKAAR (85 aa)) form a coiled coil. T292 is subject to Phosphothreonine.

Interacts with GRH1 (via C-terminus), probably forming a heterooligomer consisting of a GRH1 dimer and a BUG1 dimer.

It is found in the cytoplasm. The protein resides in the golgi apparatus. It localises to the cis-Golgi network membrane. Functionally, involved in ER to Golgi vesicle-mediated transport by either facilitating USO1-dependent and -independent tethering or increasing target accuracy of fusion events of COPII-coated vesicles. This is Binder of USO1 and GRH1 protein 1 from Saccharomyces cerevisiae (strain ATCC 204508 / S288c) (Baker's yeast).